A 505-amino-acid chain; its full sequence is Deoxyguanosinetriphosphate triphosphohydrolase (505 aa).

The HD domain occupies 66–273 (RLTHSMEVQQ…MEAADDISYC (208 aa)).

This sequence belongs to the dGTPase family. Type 1 subfamily. Homotetramer. It depends on Mg(2+) as a cofactor.

The catalysed reaction is dGTP + H2O = 2'-deoxyguanosine + triphosphate + H(+). Functionally, dGTPase preferentially hydrolyzes dGTP over the other canonical NTPs. The protein is Deoxyguanosinetriphosphate triphosphohydrolase of Escherichia coli O17:K52:H18 (strain UMN026 / ExPEC).